The primary structure comprises 300 residues: Type 1 fimbrin D-mannose specific adhesin (300 aa).

The signal sequence occupies residues 1 to 21; that stretch reads MKRVITLFAVLLMGWSVNAWS.

The protein belongs to the fimbrial protein family.

The protein localises to the fimbrium. Functionally, involved in regulation of length and mediation of adhesion of type 1 fimbriae (but not necessary for the production of fimbriae). Adhesin responsible for the binding to D-mannose. It is laterally positioned at intervals in the structure of the type 1 fimbriae. In order to integrate FimH in the fimbriae FimF and FimG are needed. The protein is Type 1 fimbrin D-mannose specific adhesin (fimH) of Escherichia coli (strain K12).